Here is a 307-residue protein sequence, read N- to C-terminus: Aspartate carbamoyltransferase catalytic subunit (307 aa).

Carbamoyl phosphate is bound by residues Arg56 and Thr57. An L-aspartate-binding site is contributed by Lys84. Carbamoyl phosphate contacts are provided by Arg106, His136, and Gln139. Residues Arg169 and Arg221 each coordinate L-aspartate. 2 residues coordinate carbamoyl phosphate: Ala262 and Pro263.

It belongs to the aspartate/ornithine carbamoyltransferase superfamily. ATCase family. Heterododecamer (2C3:3R2) of six catalytic PyrB chains organized as two trimers (C3), and six regulatory PyrI chains organized as three dimers (R2).

The enzyme catalyses carbamoyl phosphate + L-aspartate = N-carbamoyl-L-aspartate + phosphate + H(+). It functions in the pathway pyrimidine metabolism; UMP biosynthesis via de novo pathway; (S)-dihydroorotate from bicarbonate: step 2/3. In terms of biological role, catalyzes the condensation of carbamoyl phosphate and aspartate to form carbamoyl aspartate and inorganic phosphate, the committed step in the de novo pyrimidine nucleotide biosynthesis pathway. This chain is Aspartate carbamoyltransferase catalytic subunit, found in Streptococcus pneumoniae (strain JJA).